The primary structure comprises 1279 residues: Maestro heat-like repeat-containing protein family member 7 (1279 aa).

The interval 1-145 (MALSRGTSLI…NSSRPCSEDV (145 aa)) is disordered. Residues 39-61 (PDLALAPPPEHALALTPALHPAL) are compositionally biased toward low complexity. Composition is skewed to polar residues over residues 71 to 106 (PVSN…NHTS) and 124 to 140 (PSST…SSRP). 5 N-linked (GlcNAc...) asparagine glycosylation sites follow: asparagine 200, asparagine 210, asparagine 255, asparagine 267, and asparagine 296. Serine 356 is modified (phosphoserine). The N-linked (GlcNAc...) asparagine glycan is linked to asparagine 541. A run of 2 helical transmembrane segments spans residues 548 to 568 (TLVT…LLLG) and 722 to 742 (LLPI…ALLM). HEAT repeat units lie at residues 913–950 (QELC…MEQV), 992–1029 (AKVQ…GQGK), 1035–1072 (AVYV…KLQT), and 1080–1117 (EQLT…FMNW).

It localises to the membrane. The polypeptide is Maestro heat-like repeat-containing protein family member 7 (Mroh7) (Mus musculus (Mouse)).